Consider the following 129-residue polypeptide: Translation initiation factor 5A (129 aa).

Lys36 bears the Hypusine mark.

This sequence belongs to the eIF-5A family.

It localises to the cytoplasm. Its function is as follows. Functions by promoting the formation of the first peptide bond. The sequence is that of Translation initiation factor 5A from Picrophilus torridus (strain ATCC 700027 / DSM 9790 / JCM 10055 / NBRC 100828 / KAW 2/3).